The sequence spans 171 residues: Protein-export protein SecB (171 aa).

Belongs to the SecB family. In terms of assembly, homotetramer, a dimer of dimers. One homotetramer interacts with 1 SecA dimer.

Its subcellular location is the cytoplasm. Functionally, one of the proteins required for the normal export of preproteins out of the cell cytoplasm. It is a molecular chaperone that binds to a subset of precursor proteins, maintaining them in a translocation-competent state. It also specifically binds to its receptor SecA. The chain is Protein-export protein SecB from Xanthomonas oryzae pv. oryzae (strain MAFF 311018).